A 440-amino-acid polypeptide reads, in one-letter code: Protein C-ets-1 (440 aa).

Residues lysine 8 and lysine 15 each carry the N6-acetyllysine; alternate modification. Glycyl lysine isopeptide (Lys-Gly) (interchain with G-Cter in SUMO2); alternate cross-links involve residues lysine 8 and lysine 15. Lysine 15 participates in a covalent cross-link: Glycyl lysine isopeptide (Lys-Gly) (interchain with G-Cter in SUMO); alternate. Threonine 38 is modified (phosphothreonine; by MAPK). Residues 51 to 136 (ATFSGFTKEQ…EHLEILQKED (86 aa)) enclose the PNT domain. The interval 130 to 243 (EILQKEDVKP…DNMCLGRASR (114 aa)) is activation domain; required for transcription activation. Lysine 138 participates in a covalent cross-link: Glycyl lysine isopeptide (Lys-Gly) (interchain with G-Cter in SUMO2). Residue tyrosine 223 is modified to Phosphotyrosine. Lysine 227 participates in a covalent cross-link: Glycyl lysine isopeptide (Lys-Gly) (interchain with G-Cter in SUMO). Serine 251 is subject to Phosphoserine; by CaMK2. At serine 254 the chain carries Phosphoserine. Position 265 is a phosphothreonine (threonine 265). Phosphoserine is present on residues serine 267 and serine 270. Serine 282 and serine 285 each carry phosphoserine; by CaMK2. Positions 304–312 (FKDYVRDRA) are helix HI-1. Position 305 is an N6-acetyllysine (lysine 305). The tract at residues 323-330 (AAALAGYT) is helix HI-2. The segment at residues 335–415 (IQLWQFLLEL…AGKRYVYRFV (81 aa)) is a DNA-binding region (ETS). The interval 418 to 422 (LQSLL) is helix H4. The segment at 426-432 (PEELHAM) is helix H5.

It belongs to the ETS family. Binds DNA as a homodimer; homodimerization is required for transcription activation. Interacts with MAF and MAFB. Interacts with PAX5; the interaction alters DNA-binding properties. Interacts with DAXX. Interacts with UBE2I. Interacts with SP100; the interaction is direct and modulates ETS1 transcriptional activity. Phosphorylation at Ser-251, Ser-282 and Ser-285 by CaMK2/CaMKII in response to calcium signaling decreases affinity for DNA: an increasing number of phosphoserines causes DNA-binding to become progressively weaker. In terms of processing, sumoylated on Lys-15 and Lys-227, preferentially with SUMO2; which inhibits transcriptional activity. Post-translationally, ubiquitinated; which induces proteasomal degradation.

Its subcellular location is the nucleus. It is found in the cytoplasm. With respect to regulation, autoinhibited by a module composed of four alpha helices (HI-1, HI-2, H4, and H5) that flank the DNA-binding ETS domain, reducing the affinity for DNA. Phosphorylation by CaMK2/CaMKII in response to calcium signaling decreases affinity for DNA. In terms of biological role, transcription factor. Directly controls the expression of cytokine and chemokine genes in a wide variety of different cellular contexts. May control the differentiation, survival and proliferation of lymphoid cells. May also regulate angiogenesis through regulation of expression of genes controlling endothelial cell migration and invasion. In Mus musculus (Mouse), this protein is Protein C-ets-1 (Ets1).